We begin with the raw amino-acid sequence, 127 residues long: Mitochondrial pyruvate carrier 2 (127 aa).

Residues Ser-2–Thr-40 lie on the Mitochondrial matrix side of the membrane. A helical transmembrane segment spans residues Val-41–Ala-61. The Mitochondrial intermembrane segment spans residues Arg-62 to Ser-72. The helical transmembrane segment at Ala-73–Ile-90 threads the bilayer. At Pro-91–Ser-95 the chain is on the mitochondrial matrix side. A helical transmembrane segment spans residues Leu-96 to Trp-115. Over Arg-116–Lys-127 the chain is Mitochondrial intermembrane.

The protein belongs to the mitochondrial pyruvate carrier (MPC) (TC 2.A.105) family. In terms of assembly, homodimer. Homooligomer. Forms heterodimers with MPC1 and MPC1L. The heterodimer is the more stable and dominant form.

Its subcellular location is the mitochondrion inner membrane. It catalyses the reaction pyruvate(out) + H(+)(out) = pyruvate(in) + H(+)(in). Functionally, mediates the uptake of pyruvate into mitochondria. In Pongo abelii (Sumatran orangutan), this protein is Mitochondrial pyruvate carrier 2 (MPC2).